We begin with the raw amino-acid sequence, 409 residues long: MTNTKRGPLLLILFAALTAGAGNGITIVAFPWLVLQHNGSALDASIVAMAGTLPLLVATLIAGAAVDYLGRRRVSMISDLLSALSVAAVPVLALIFGVDAVNVAVLAVLAGLGAFFDPAGMTARETMLPEAAGRAGWTLDHANSVYEAVFNLGYIVGPGIGGLMIATLGGINTMWVTAGAFCCSILAISVLRLEGAGAPDRSVLTEAVLAGIVEGLRFVWYTPVLRTLAIVDLVATGLYMPMESVLFPKYFTDRNEPTELGWVLMALSIGGLLGALGYAVMSRYMSRRATMLTAVITLGVAMTVIAFLPPLPLILVLCAIVGFVYGPIAPIYNYVMQTTAPQHLRGRVVGVMGSLAYAAGPLGLILAGPLADAAGLHATFLALSLPMLLLGVVAVFLPRLRELDLASKP.

A run of 12 helical transmembrane segments spans residues 10-30 (LLIL…IVAF), 46-66 (IVAM…GAAV), 80-98 (LLSA…IFGV), 104-123 (AVLA…GMTA), 144-168 (SVYE…IATL), 174-193 (MWVT…VLRL), 218-240 (FVWY…GLYM), 260-282 (LGWV…AVMS), 289-308 (ATML…IAFL), 313-335 (LILV…YNYV), 348-370 (VVGV…AGPL), and 375-397 (GLHA…AVFL).

Belongs to the major facilitator superfamily. Drug:H(+) antiporter-3 (DHA3) (TC 2.A.1.21) family.

The protein resides in the cell inner membrane. With respect to regulation, efflux activity is inhibited by carbonyl cyanide m-chlorophenylhydrazone (CCCP) and reserpine, but not by o-vanadate or chlorpromazine (CPZ). In terms of biological role, efflux pump that contributes to intrinsic antibiotic resistance. The pump uses the electrochemical gradient as a source of energy. Confers low-level resistance to tetracycline and to several aminoglycosides, including streptomycin, gentamicin, 2'-N-ethylnetilmicin and 6'-N-ethylnetilmicin. The chain is Multidrug efflux pump Tap from Mycolicibacterium fortuitum (Mycobacterium fortuitum).